The chain runs to 333 residues: 6-phosphogluconolactonase (333 aa).

This sequence belongs to the cycloisomerase 2 family.

The enzyme catalyses 6-phospho-D-glucono-1,5-lactone + H2O = 6-phospho-D-gluconate + H(+). Its pathway is carbohydrate degradation; pentose phosphate pathway; D-ribulose 5-phosphate from D-glucose 6-phosphate (oxidative stage): step 2/3. Its function is as follows. Catalyzes the hydrolysis of 6-phosphogluconolactone to 6-phosphogluconate. This chain is 6-phosphogluconolactonase, found in Buchnera aphidicola subsp. Schizaphis graminum (strain Sg).